Here is a 654-residue protein sequence, read N- to C-terminus: Probable Xaa-Pro aminopeptidase P (654 aa).

Mn(2+) contacts are provided by D449, D460, E558, and E572.

This sequence belongs to the peptidase M24B family. Mn(2+) serves as cofactor.

The enzyme catalyses Release of any N-terminal amino acid, including proline, that is linked to proline, even from a dipeptide or tripeptide.. Functionally, catalyzes the removal of a penultimate prolyl residue from the N-termini of peptides. This chain is Probable Xaa-Pro aminopeptidase P (ampp), found in Aspergillus flavus (strain ATCC 200026 / FGSC A1120 / IAM 13836 / NRRL 3357 / JCM 12722 / SRRC 167).